A 317-amino-acid chain; its full sequence is Ribose-phosphate pyrophosphokinase A (317 aa).

Residues Asp-130, His-132, and Asp-145 each contribute to the Mg(2+) site. The interval 212–227 (KDKVALIVDDMADTCG) is binding of phosphoribosylpyrophosphate.

Belongs to the ribose-phosphate pyrophosphokinase family. The cofactor is Mg(2+).

It catalyses the reaction D-ribose 5-phosphate + ATP = 5-phospho-alpha-D-ribose 1-diphosphate + AMP + H(+). It functions in the pathway metabolic intermediate biosynthesis; 5-phospho-alpha-D-ribose 1-diphosphate biosynthesis; 5-phospho-alpha-D-ribose 1-diphosphate from D-ribose 5-phosphate (route I): step 1/1. The polypeptide is Ribose-phosphate pyrophosphokinase A (prsA) (Dictyostelium discoideum (Social amoeba)).